A 155-amino-acid chain; its full sequence is Endoribonuclease YbeY (155 aa).

The Zn(2+) site is built by H114, H118, and H124.

Belongs to the endoribonuclease YbeY family. Zn(2+) is required as a cofactor.

Its subcellular location is the cytoplasm. Its function is as follows. Single strand-specific metallo-endoribonuclease involved in late-stage 70S ribosome quality control and in maturation of the 3' terminus of the 16S rRNA. The polypeptide is Endoribonuclease YbeY (Salmonella arizonae (strain ATCC BAA-731 / CDC346-86 / RSK2980)).